The sequence spans 324 residues: dITP/XTP pyrophosphatase (324 aa).

The tract at residues 1–127 (MTKTIFESKT…KNDNNFGDTI (127 aa)) is unknown. The segment at 128-324 (LIATHNEGKT…EVFPKWQLEN (197 aa)) is NTP pyrophosphatase. Residue 131-136 (THNEGK) coordinates substrate. Positions 164 and 193 each coordinate Mg(2+). D193 functions as the Proton acceptor in the catalytic mechanism. Substrate-binding positions include S194, 277 to 280 (FGYD), K300, and 305 to 306 (HR).

Belongs to the HAM1 NTPase family. Homodimer. Mg(2+) is required as a cofactor.

It carries out the reaction XTP + H2O = XMP + diphosphate + H(+). It catalyses the reaction dITP + H2O = dIMP + diphosphate + H(+). The enzyme catalyses ITP + H2O = IMP + diphosphate + H(+). In terms of biological role, pyrophosphatase that catalyzes the hydrolysis of nucleoside triphosphates to their monophosphate derivatives, with a high preference for the non-canonical purine nucleotides XTP (xanthosine triphosphate), dITP (deoxyinosine triphosphate) and ITP. Seems to function as a house-cleaning enzyme that removes non-canonical purine nucleotides from the nucleotide pool, thus preventing their incorporation into DNA/RNA and avoiding chromosomal lesions. This chain is dITP/XTP pyrophosphatase, found in Streptococcus agalactiae serotype III (strain NEM316).